Here is a 223-residue protein sequence, read N- to C-terminus: Deoxyribose-phosphate aldolase (223 aa).

Residue Asp91 is the Proton donor/acceptor of the active site. Residue Lys153 is the Schiff-base intermediate with acetaldehyde of the active site. The Proton donor/acceptor role is filled by Lys182.

The protein belongs to the DeoC/FbaB aldolase family. DeoC type 1 subfamily.

It is found in the cytoplasm. It catalyses the reaction 2-deoxy-D-ribose 5-phosphate = D-glyceraldehyde 3-phosphate + acetaldehyde. It participates in carbohydrate degradation; 2-deoxy-D-ribose 1-phosphate degradation; D-glyceraldehyde 3-phosphate and acetaldehyde from 2-deoxy-alpha-D-ribose 1-phosphate: step 2/2. In terms of biological role, catalyzes a reversible aldol reaction between acetaldehyde and D-glyceraldehyde 3-phosphate to generate 2-deoxy-D-ribose 5-phosphate. This is Deoxyribose-phosphate aldolase from Streptococcus pyogenes serotype M3 (strain ATCC BAA-595 / MGAS315).